The chain runs to 278 residues: Undecaprenyl-diphosphatase 3 (278 aa).

6 consecutive transmembrane segments (helical) span residues 42–62 (DITAFTAIIQVGAVFATLLYF), 88–108 (YRFGWAVILGSIPIGLVGVAF), 119–139 (LWFVGGALILWSGVMGYADHV), 187–207 (VAVTRLSFFLSIPALMAAAAL), 224–244 (ATIIATVVSFAVAYVAIAWLL), and 254–274 (VFIGYRLALGATVLFLVATGI).

The protein belongs to the UppP family.

The protein resides in the cell membrane. The catalysed reaction is di-trans,octa-cis-undecaprenyl diphosphate + H2O = di-trans,octa-cis-undecaprenyl phosphate + phosphate + H(+). Catalyzes the dephosphorylation of undecaprenyl diphosphate (UPP). Confers resistance to bacitracin. The sequence is that of Undecaprenyl-diphosphatase 3 from Frankia casuarinae (strain DSM 45818 / CECT 9043 / HFP020203 / CcI3).